The sequence spans 108 residues: UPF0102 protein Sfri_0388 (108 aa).

This sequence belongs to the UPF0102 family.

This chain is UPF0102 protein Sfri_0388, found in Shewanella frigidimarina (strain NCIMB 400).